Consider the following 415-residue polypeptide: Serine--tRNA ligase (415 aa).

231–233 (TAE) contributes to the L-serine binding site. 262 to 264 (RSE) provides a ligand contact to ATP. Glutamate 285 lines the L-serine pocket. 349–352 (EISS) lines the ATP pocket. Serine 383 lines the L-serine pocket.

The protein belongs to the class-II aminoacyl-tRNA synthetase family. Type-1 seryl-tRNA synthetase subfamily. As to quaternary structure, homodimer. The tRNA molecule binds across the dimer.

It is found in the cytoplasm. The catalysed reaction is tRNA(Ser) + L-serine + ATP = L-seryl-tRNA(Ser) + AMP + diphosphate + H(+). The enzyme catalyses tRNA(Sec) + L-serine + ATP = L-seryl-tRNA(Sec) + AMP + diphosphate + H(+). It participates in aminoacyl-tRNA biosynthesis; selenocysteinyl-tRNA(Sec) biosynthesis; L-seryl-tRNA(Sec) from L-serine and tRNA(Sec): step 1/1. Functionally, catalyzes the attachment of serine to tRNA(Ser). Is also able to aminoacylate tRNA(Sec) with serine, to form the misacylated tRNA L-seryl-tRNA(Sec), which will be further converted into selenocysteinyl-tRNA(Sec). This chain is Serine--tRNA ligase, found in Helicobacter pylori (strain ATCC 700392 / 26695) (Campylobacter pylori).